Consider the following 147-residue polypeptide: Putative HTH-type transcriptional regulator slr0846 (147 aa).

The HTH rrf2-type domain occupies 2–130; the sequence is KLTTKSHYSV…YSITLADLYY (129 aa).

This chain is Putative HTH-type transcriptional regulator slr0846, found in Synechocystis sp. (strain ATCC 27184 / PCC 6803 / Kazusa).